The chain runs to 340 residues: GTP-binding protein REM 2 (340 aa).

Over residues 1-13 (MHTDLDTDMDMDT) the composition is skewed to acidic residues. The disordered stretch occupies residues 1–107 (MHTDLDTDMD…SDSLGSGEAA (107 aa)). Serine 27 is modified (phosphoserine). Over residues 40 to 53 (LLKKSEKLLAELDR) the composition is skewed to basic and acidic residues. The segment covering 93–104 (SSSGSSDSLGSG) has biased composition (low complexity). GTP contacts are provided by residues 121–128 (GESGVGKS), 229–232 (NKSD), and 260–261 (AA). Residues 283–308 (RNHAGGQRPDPGSPEGPAPPARRESL) are disordered. Residues 293-302 (PGSPEGPAPP) show a composition bias toward pro residues. Position 295 is a phosphoserine (serine 295).

The protein belongs to the small GTPase superfamily. RGK family.

It is found in the cell membrane. Its function is as follows. Binds GTP saturably and exhibits a low intrinsic rate of GTP hydrolysis. This Homo sapiens (Human) protein is GTP-binding protein REM 2 (REM2).